The sequence spans 471 residues: Extracellular endo-alpha-(1-&gt;5)-L-arabinanase (471 aa).

The first 19 residues, 1–19 (MRFLFLMITLTALTGYILA), serve as a signal peptide directing secretion. Asp32 functions as the Proton acceptor in the catalytic mechanism. Residues Asp32, Gly117, 167–170 (NALD), 187–189 (SWF), and 219–223 (HSSME) each bind substrate. Catalysis depends on Glu223, which acts as the Proton donor. His314 serves as a coordination point for Ca(2+).

This sequence belongs to the glycosyl hydrolase 43 family. In terms of assembly, monomer. Ca(2+) serves as cofactor.

It localises to the secreted. The enzyme catalyses Endohydrolysis of (1-&gt;5)-alpha-arabinofuranosidic linkages in (1-&gt;5)-arabinans.. It participates in glycan metabolism; L-arabinan degradation. Involved in the degradation of arabinan and is a key enzyme in the complete degradation of the plant cell wall. Catalyzes the internal cleavage of alpha-(1-&gt;5)-L-arabinofuranosyl residues in different arabinan-containing polysaccharides, and releases arabinotriose and arabinobiose as end products. It acts on branched arabinan (from sugar beet), but more slowly when compared to linear or debranched arabinan. The protein is Extracellular endo-alpha-(1-&gt;5)-L-arabinanase of Thermotoga petrophila (strain ATCC BAA-488 / DSM 13995 / JCM 10881 / RKU-1).